A 55-amino-acid chain; its full sequence is Large ribosomal subunit protein bL33 (55 aa).

Belongs to the bacterial ribosomal protein bL33 family.

This Mesorhizobium japonicum (strain LMG 29417 / CECT 9101 / MAFF 303099) (Mesorhizobium loti (strain MAFF 303099)) protein is Large ribosomal subunit protein bL33.